Here is a 347-residue protein sequence, read N- to C-terminus: Isopentenyl-diphosphate delta-isomerase (347 aa).

9–10 provides a ligand contact to substrate; that stretch reads RK. FMN is bound by residues serine 67, 68-70, serine 98, and asparagine 127; that span reads SMT. Residue 98 to 100 participates in substrate binding; it reads SQR. A substrate-binding site is contributed by glutamine 162. Glutamate 163 serves as a coordination point for Mg(2+). Residues lysine 194, threonine 224, 274-276, and 295-296 contribute to the FMN site; these read GIR and AA.

Belongs to the IPP isomerase type 2 family. Homooctamer. Dimer of tetramers. It depends on FMN as a cofactor. Requires NADPH as cofactor. The cofactor is Mg(2+).

It is found in the cytoplasm. It catalyses the reaction isopentenyl diphosphate = dimethylallyl diphosphate. Involved in the biosynthesis of isoprenoids. Catalyzes the 1,3-allylic rearrangement of the homoallylic substrate isopentenyl (IPP) to its allylic isomer, dimethylallyl diphosphate (DMAPP). In Cronobacter sakazakii (strain ATCC BAA-894) (Enterobacter sakazakii), this protein is Isopentenyl-diphosphate delta-isomerase.